The chain runs to 225 residues: Thymidylate kinase (225 aa).

Residue 10 to 17 (GPEGAGKT) coordinates ATP.

This sequence belongs to the thymidylate kinase family.

It carries out the reaction dTMP + ATP = dTDP + ADP. Functionally, phosphorylation of dTMP to form dTDP in both de novo and salvage pathways of dTTP synthesis. This Geobacillus thermodenitrificans (strain NG80-2) protein is Thymidylate kinase.